A 278-amino-acid polypeptide reads, in one-letter code: MIKLGSHISFKSPNYLLGAAAESVNNKANCMMIYLGAPQTTKRVSVEKYKYNEYLEKYSKLITPDDIIVHAPYIVNPSSVSKNKFAIDFLVQEIEKMNYIGAKYLVLHPGSYTTFSVQESLDTFIASVKQILSRTKDVVICVETMAGKGAEVGINFDQINYFIHKIRNDRFAVCLDTCHIFDAGYDIRKYEEFKAEINKYNLLPHIKVIHLNDSKNSLGSHKDRHANIDKGFIGLETLAKFVHDPDFDNIPIILETPWVDNKPIYDQEIKMLLEHKAK.

Residues His70, His108, Glu143, Asp176, His179, His210, Asp223, His225, and Glu255 each coordinate Zn(2+).

It belongs to the AP endonuclease 2 family. The cofactor is Zn(2+).

The catalysed reaction is Endonucleolytic cleavage to 5'-phosphooligonucleotide end-products.. In terms of biological role, endonuclease IV plays a role in DNA repair. It cleaves phosphodiester bonds at apurinic or apyrimidinic (AP) sites, generating a 3'-hydroxyl group and a 5'-terminal sugar phosphate. This Mycoplasmopsis agalactiae (strain NCTC 10123 / CIP 59.7 / PG2) (Mycoplasma agalactiae) protein is Probable endonuclease 4.